The following is a 945-amino-acid chain: Probable inorganic carbon transporter subunit DabA (945 aa).

Residues C408, D410, H651, and C666 each contribute to the Zn(2+) site.

The protein belongs to the inorganic carbon transporter (TC 9.A.2) DabA family. Forms a complex with DabB. The cofactor is Zn(2+).

Its subcellular location is the cell inner membrane. Its function is as follows. Part of an energy-coupled inorganic carbon pump. This Sulfurihydrogenibium azorense (strain DSM 15241 / OCM 825 / Az-Fu1) protein is Probable inorganic carbon transporter subunit DabA.